Reading from the N-terminus, the 254-residue chain is Adenosylcobinamide-GDP ribazoletransferase (254 aa).

The next 7 helical transmembrane spans lie at 29–49 (LFWFPVVGLLLGSIQAALGYF), 50–70 (TSLLGWNELSAAFVVLGGIAL), 98–118 (IMKDPNVGSFGAIALSGMMLL), 121–141 (IAILKLVDIGAFACIAAGVLL), 170–190 (AGVVHIVVTSALTLLFLFPLL), 198–218 (LYAVVAMISAALAAALLTGLL), and 230–250 (VLGAGSEVTELFVWIAAALSA).

This sequence belongs to the CobS family. Mg(2+) serves as cofactor.

The protein resides in the cell inner membrane. It carries out the reaction alpha-ribazole + adenosylcob(III)inamide-GDP = adenosylcob(III)alamin + GMP + H(+). It catalyses the reaction alpha-ribazole 5'-phosphate + adenosylcob(III)inamide-GDP = adenosylcob(III)alamin 5'-phosphate + GMP + H(+). Its pathway is cofactor biosynthesis; adenosylcobalamin biosynthesis; adenosylcobalamin from cob(II)yrinate a,c-diamide: step 7/7. Joins adenosylcobinamide-GDP and alpha-ribazole to generate adenosylcobalamin (Ado-cobalamin). Also synthesizes adenosylcobalamin 5'-phosphate from adenosylcobinamide-GDP and alpha-ribazole 5'-phosphate. In Pelodictyon phaeoclathratiforme (strain DSM 5477 / BU-1), this protein is Adenosylcobinamide-GDP ribazoletransferase.